A 156-amino-acid polypeptide reads, in one-letter code: Myosin regulatory light chain, striated adductor muscle (156 aa).

A Blocked amino end (Ala) modification is found at alanine 1. 2 EF-hand domains span residues 15 to 50 and 84 to 119; these read KQIQ…LGRT and DSEE…MGDN. 4 residues coordinate Ca(2+): aspartate 28, aspartate 30, aspartate 32, and aspartate 39.

In molluscan muscle, calcium regulation is associated with myosin rather than with actin. Muscle myosin contains two types of light chains: the catalytic light chain, essential for ATPase activity, and the regulatory light chain, a calcium-binding protein responsible for Ca(2+) dependent binding and Ca(2+) dependent Mg-ATPase activity. The polypeptide is Myosin regulatory light chain, striated adductor muscle (Chlamys nipponensis akazara (Akazara scallop)).